The sequence spans 359 residues: Pyruvate dehydrogenase E1 component subunit beta, mitochondrial (359 aa).

Residues 1–19 (MLGVIRNKTIRPSFSAFRF) constitute a mitochondrion transit peptide. Glutamate 82 serves as a coordination point for thiamine diphosphate. K(+) is bound by residues isoleucine 135, alanine 183, isoleucine 184, and aspartate 186.

In terms of assembly, tetramer of 2 alpha and 2 beta subunits. Thiamine diphosphate is required as a cofactor.

It localises to the mitochondrion matrix. It carries out the reaction N(6)-[(R)-lipoyl]-L-lysyl-[protein] + pyruvate + H(+) = N(6)-[(R)-S(8)-acetyldihydrolipoyl]-L-lysyl-[protein] + CO2. Its function is as follows. The pyruvate dehydrogenase complex catalyzes the overall conversion of pyruvate to acetyl-CoA and CO(2). It contains multiple copies of three enzymatic components: pyruvate dehydrogenase (E1), dihydrolipoamide acetyltransferase (E2) and lipoamide dehydrogenase (E3). In Pisum sativum (Garden pea), this protein is Pyruvate dehydrogenase E1 component subunit beta, mitochondrial.